Consider the following 217-residue polypeptide: Uracil-DNA glycosylase (217 aa).

The active-site Proton acceptor is aspartate 62.

It belongs to the uracil-DNA glycosylase (UDG) superfamily. UNG family.

The protein resides in the cytoplasm. It carries out the reaction Hydrolyzes single-stranded DNA or mismatched double-stranded DNA and polynucleotides, releasing free uracil.. Functionally, excises uracil residues from the DNA which can arise as a result of misincorporation of dUMP residues by DNA polymerase or due to deamination of cytosine. This Streptococcus gordonii (strain Challis / ATCC 35105 / BCRC 15272 / CH1 / DL1 / V288) protein is Uracil-DNA glycosylase.